The chain runs to 489 residues: 3-octaprenyl-4-hydroxybenzoate carboxy-lyase (489 aa).

N172 provides a ligand contact to Mn(2+). Prenylated FMN is bound by residues 175–177, 189–191, and 194–195; these read IYR, RWL, and RG. E238 is a Mn(2+) binding site. The active-site Proton donor is D287.

This sequence belongs to the UbiD family. As to quaternary structure, homohexamer. The cofactor is prenylated FMN. Mn(2+) is required as a cofactor.

Its subcellular location is the cell membrane. It carries out the reaction a 4-hydroxy-3-(all-trans-polyprenyl)benzoate + H(+) = a 2-(all-trans-polyprenyl)phenol + CO2. It functions in the pathway cofactor biosynthesis; ubiquinone biosynthesis. Functionally, catalyzes the decarboxylation of 3-octaprenyl-4-hydroxy benzoate to 2-octaprenylphenol, an intermediate step in ubiquinone biosynthesis. This Salmonella arizonae (strain ATCC BAA-731 / CDC346-86 / RSK2980) protein is 3-octaprenyl-4-hydroxybenzoate carboxy-lyase.